The chain runs to 273 residues: Formamidopyrimidine-DNA glycosylase (273 aa).

P2 acts as the Schiff-base intermediate with DNA in catalysis. The active-site Proton donor is E3. K60 (proton donor; for beta-elimination activity) is an active-site residue. Positions 94, 113, and 154 each coordinate DNA. The segment at 239-273 adopts an FPG-type zinc-finger fold; sequence NAYDREGQPCPRCGATIIKTVVAQRGTHYCPECQR. R263 functions as the Proton donor; for delta-elimination activity in the catalytic mechanism.

The protein belongs to the FPG family. Monomer. Zn(2+) is required as a cofactor.

The catalysed reaction is Hydrolysis of DNA containing ring-opened 7-methylguanine residues, releasing 2,6-diamino-4-hydroxy-5-(N-methyl)formamidopyrimidine.. It catalyses the reaction 2'-deoxyribonucleotide-(2'-deoxyribose 5'-phosphate)-2'-deoxyribonucleotide-DNA = a 3'-end 2'-deoxyribonucleotide-(2,3-dehydro-2,3-deoxyribose 5'-phosphate)-DNA + a 5'-end 5'-phospho-2'-deoxyribonucleoside-DNA + H(+). Functionally, involved in base excision repair of DNA damaged by oxidation or by mutagenic agents. Acts as a DNA glycosylase that recognizes and removes damaged bases. Has a preference for oxidized purines, such as 7,8-dihydro-8-oxoguanine (8-oxoG). Has AP (apurinic/apyrimidinic) lyase activity and introduces nicks in the DNA strand. Cleaves the DNA backbone by beta-delta elimination to generate a single-strand break at the site of the removed base with both 3'- and 5'-phosphates. This chain is Formamidopyrimidine-DNA glycosylase, found in Roseiflexus sp. (strain RS-1).